The primary structure comprises 327 residues: Aspartate--ammonia ligase (327 aa).

The protein belongs to the class-II aminoacyl-tRNA synthetase family. AsnA subfamily.

The protein resides in the cytoplasm. It catalyses the reaction L-aspartate + NH4(+) + ATP = L-asparagine + AMP + diphosphate + H(+). It functions in the pathway amino-acid biosynthesis; L-asparagine biosynthesis; L-asparagine from L-aspartate (ammonia route): step 1/1. This is Aspartate--ammonia ligase from Bacillus anthracis (strain A0248).